The sequence spans 509 residues: Scavenger receptor class B member 1 (509 aa).

Topologically, residues 1–11 (MGGSSRARWVA) are cytoplasmic. Residues 12-32 (LGLGALGLLFAALGVVMILMV) form a helical membrane-spanning segment. Residues 33 to 440 (PSLIKQQVLK…YTQLVLMPQV (408 aa)) lie on the Extracellular side of the membrane. N-linked (GlcNAc...) asparagine glycosylation is found at Asn-102, Asn-108, Asn-116, Asn-173, Asn-212, Asn-227, Asn-255, Asn-288, Asn-310, Asn-330, and Asn-383. An intrachain disulfide couples Cys-251 to Cys-384. The helical transmembrane segment at 441–461 (LHYAQYVLLGLGGLLLLVPII) threads the bilayer. Cys-462 is lipidated: S-palmitoyl cysteine. Residues 462-509 (CQLRSQEKCFLFWSGSKKGSQDKEAIQAYSESLMSPAAKGTVLQEAKL) lie on the Cytoplasmic side of the membrane.

It belongs to the CD36 family. The C-terminal region binds to PDZK1. Post-translationally, N-glycosylated. The six cysteines of the extracellular domain are all involved in intramolecular disulfide bonds. Expressed primarily in liver, ovary and adrenal gland, and, at lower levels in other non-placental steroidogenic tissues, including adipose tissue, mammary gland and testis (at protein level). Isoform 2 is expressed at lower levels than isoform 1 in liver, testis and adrenal gland. At the mRNA, but not at the protein level, isoform 2 is the predominant isoform in testis (80%).

Its subcellular location is the cell membrane. It localises to the membrane. It is found in the caveola. Its function is as follows. Receptor for different ligands such as phospholipids, cholesterol ester, lipoproteins, phosphatidylserine and apoptotic cells. Both isoform 1 and isoform 2 act as receptors for HDL, mediating selective uptake of cholesteryl ether and HDL-dependent cholesterol efflux. Also facilitates the flux of free and esterified cholesterol between the cell surface and apoB-containing lipoproteins and modified lipoproteins, although less efficiently than HDL. May be involved in the phagocytosis of apoptotic cells, via its phosphatidylserine binding activity. This chain is Scavenger receptor class B member 1 (Scarb1), found in Mus musculus (Mouse).